The chain runs to 327 residues: Fructose-1,6-bisphosphatase class 1 (327 aa).

4 residues coordinate Mg(2+): Glu84, Asp103, Leu105, and Asp106. Substrate-binding positions include 106-109 (DGSS), Asn198, and Lys264. A Mg(2+)-binding site is contributed by Glu270.

It belongs to the FBPase class 1 family. Homotetramer. It depends on Mg(2+) as a cofactor.

It is found in the cytoplasm. It catalyses the reaction beta-D-fructose 1,6-bisphosphate + H2O = beta-D-fructose 6-phosphate + phosphate. Its pathway is carbohydrate biosynthesis; gluconeogenesis. The chain is Fructose-1,6-bisphosphatase class 1 from Psychrobacter cryohalolentis (strain ATCC BAA-1226 / DSM 17306 / VKM B-2378 / K5).